The sequence spans 472 residues: Putative ankyrin repeat protein L675 (472 aa).

ANK repeat units lie at residues tyrosine 125 to leucine 156, aspartate 187 to isoleucine 216, tyrosine 265 to isoleucine 295, histidine 297 to tyrosine 323, asparagine 325 to serine 351, asparagine 352 to alanine 381, asparagine 382 to isoleucine 411, and aspartate 413 to aspartate 440.

The chain is Putative ankyrin repeat protein L675 from Acanthamoeba polyphaga (Amoeba).